The sequence spans 577 residues: Glucose-6-phosphate 1-dehydrogenase, chloroplastic (577 aa).

The interval 1–20 (MGVQLRLNPCSSSSAATSPS) is disordered. Residues 1–63 (MGVQLRLNPC…QPRKHFEVFS (63 aa)) constitute a chloroplast transit peptide. Positions 11–20 (SSSSAATSPS) are enriched in low complexity. Residues 97-104 (GASGDLAK) and Arg131 contribute to the NADP(+) site. Cys149 and Cys157 are joined by a disulfide. An NADP(+)-binding site is contributed by Lys234. D-glucose 6-phosphate is bound by residues Lys234, 264 to 268 (HYLGK), Glu302, and Asp321. Catalysis depends on His326, which acts as the Proton acceptor. Lys419 provides a ligand contact to NADP(+). Lys422 and Lys427 together coordinate D-glucose 6-phosphate. The NADP(+) site is built by Arg428, Arg432, and Arg461. A D-glucose 6-phosphate-binding site is contributed by Gln463. Residues 469–471 (YLK) and Arg554 contribute to the NADP(+) site.

Belongs to the glucose-6-phosphate dehydrogenase family. As to quaternary structure, homodimer. In terms of tissue distribution, green tissues, leaves and chloroplasts.

The protein localises to the plastid. Its subcellular location is the chloroplast. It catalyses the reaction D-glucose 6-phosphate + NADP(+) = 6-phospho-D-glucono-1,5-lactone + NADPH + H(+). Its pathway is carbohydrate degradation; pentose phosphate pathway; D-ribulose 5-phosphate from D-glucose 6-phosphate (oxidative stage): step 1/3. Regulated by metabolites. Post-translationally inactivated by cysteine-mediated redox modification via the ferredoxin-thioredoxin system in the light and this avoids futile cycles with photosynthetic CO2 fixation. Functionally, catalyzes the rate-limiting step of the oxidative pentose-phosphate pathway, which represents a route for the dissimilation of carbohydrates besides glycolysis. The main function of this enzyme is to provide reducing power (NADPH) and pentose phosphates for fatty acid and nucleic acid synthesis which are involved in membrane synthesis and cell division. This Solanum tuberosum (Potato) protein is Glucose-6-phosphate 1-dehydrogenase, chloroplastic.